Here is a 113-residue protein sequence, read N- to C-terminus: Protein Asterix (113 aa).

Residues 81 to 97 form a helical membrane-spanning segment; the sequence is IVSSFMLSVSAVVMSYL.

This sequence belongs to the Asterix family.

Its subcellular location is the membrane. This Caenorhabditis elegans protein is Protein Asterix.